Consider the following 292-residue polypeptide: Shikimate dehydrogenase (NADP(+)) (292 aa).

Shikimate is bound by residues 22 to 24 and Ser69; that span reads SLS. Lys73 acts as the Proton acceptor in catalysis. 2 residues coordinate shikimate: Asn94 and Asp111. NADP(+) is bound by residues 135-139 and Ile236; that span reads GVGGA. Tyr238 is a binding site for shikimate. Residue Gly260 participates in NADP(+) binding.

Belongs to the shikimate dehydrogenase family. In terms of assembly, homodimer.

It carries out the reaction shikimate + NADP(+) = 3-dehydroshikimate + NADPH + H(+). It functions in the pathway metabolic intermediate biosynthesis; chorismate biosynthesis; chorismate from D-erythrose 4-phosphate and phosphoenolpyruvate: step 4/7. Involved in the biosynthesis of the chorismate, which leads to the biosynthesis of aromatic amino acids. Catalyzes the reversible NADPH linked reduction of 3-dehydroshikimate (DHSA) to yield shikimate (SA). This Streptococcus pyogenes serotype M18 (strain MGAS8232) protein is Shikimate dehydrogenase (NADP(+)).